A 154-amino-acid chain; its full sequence is Iron-sulfur cluster assembly 2 homolog, mitochondrial (154 aa).

A mitochondrion-targeting transit peptide spans 1-8; it reads MAAAWGSS. The disordered stretch occupies residues 29-49; it reads SLGPQARREASSSSPEAGEGQ. The segment covering 39–49 has biased composition (low complexity); the sequence is SSSSPEAGEGQ. 3 residues coordinate Fe cation: C79, C144, and C146.

Belongs to the HesB/IscA family. In terms of assembly, heterotetramer; forms a dimer of dimers with IBA57. Interacts with [2Fe-2S]-ISCA2 forming the heterodimer [2Fe- 2S]-ISCA2-IBA57 complex; [2Fe-2S] cluster binding is absolutely required to promote the complex formation.

It localises to the mitochondrion. Involved in the maturation of mitochondrial 4Fe-4S proteins functioning late in the iron-sulfur cluster assembly pathway. May be involved in the binding of an intermediate of Fe/S cluster assembly. This chain is Iron-sulfur cluster assembly 2 homolog, mitochondrial (ISCA2), found in Homo sapiens (Human).